The following is a 777-amino-acid chain: Mediator of RNA polymerase II transcription subunit 15 (777 aa).

Disordered stretches follow at residues 120-139 and 418-520; these read MNLPGQPQPGASGMAPHGIT and SIPV…EEQQ. The segment covering 420-434 has biased composition (low complexity); it reads PVMSSPSPVQQVQTP. Over residues 435-448 the composition is skewed to pro residues; the sequence is QPMPPPPQPSPQPS. Residues 449–471 show a composition bias toward low complexity; sequence QPMSQPNSNVSSGPAPSPSSFMP. The segment covering 500 to 519 has biased composition (polar residues); sequence TPGNPNSVMSPASNNQSEEQ.

Belongs to the Mediator complex subunit 15 family. Component of the Mediator complex. Interacts with srebf1 and srebf2. Interacts with smad2, smad3 and smad4.

It localises to the cytoplasm. The protein localises to the nucleus. Component of the Mediator complex, a coactivator involved in the regulated transcription of nearly all RNA polymerase II-dependent genes. Mediator functions as a bridge to convey information from gene-specific regulatory proteins to the basal RNA polymerase II transcription machinery. Mediator is recruited to promoters by direct interactions with regulatory proteins and serves as a scaffold for the assembly of a functional preinitiation complex with RNA polymerase II and the general transcription factors. Required for cholesterol-dependent gene regulation. Positively regulates the Nodal signaling pathway. The protein is Mediator of RNA polymerase II transcription subunit 15 (med15) of Xenopus laevis (African clawed frog).